The following is a 207-amino-acid chain: Ribosomal RNA small subunit methyltransferase G (207 aa).

Residues Gly-73, Leu-78, 124 to 125 (VE), and Arg-139 contribute to the S-adenosyl-L-methionine site.

It belongs to the methyltransferase superfamily. RNA methyltransferase RsmG family.

The protein resides in the cytoplasm. It catalyses the reaction guanosine(527) in 16S rRNA + S-adenosyl-L-methionine = N(7)-methylguanosine(527) in 16S rRNA + S-adenosyl-L-homocysteine. Its function is as follows. Specifically methylates the N7 position of guanine in position 527 of 16S rRNA. This chain is Ribosomal RNA small subunit methyltransferase G, found in Salmonella choleraesuis (strain SC-B67).